A 313-amino-acid polypeptide reads, in one-letter code: tRNA dimethylallyltransferase (313 aa).

An ATP-binding site is contributed by 11 to 18 (GPTAGGKT). 13–18 (TAGGKT) is a binding site for substrate. Interaction with substrate tRNA regions lie at residues 36–39 (DSAL), 160–164 (QRIGR), and 243–248 (RCVGYR).

The protein belongs to the IPP transferase family. As to quaternary structure, monomer. Mg(2+) serves as cofactor.

It catalyses the reaction adenosine(37) in tRNA + dimethylallyl diphosphate = N(6)-dimethylallyladenosine(37) in tRNA + diphosphate. In terms of biological role, catalyzes the transfer of a dimethylallyl group onto the adenine at position 37 in tRNAs that read codons beginning with uridine, leading to the formation of N6-(dimethylallyl)adenosine (i(6)A). The protein is tRNA dimethylallyltransferase of Neisseria meningitidis serogroup C / serotype 2a (strain ATCC 700532 / DSM 15464 / FAM18).